The following is a 76-amino-acid chain: Conotoxin VnMSGL-0112 (76 aa).

The N-terminal stretch at 1 to 20 is a signal peptide; that stretch reads MSGLGIMVLTLLLLVSMATS. The propeptide occupies 21–45; it reads HQDGRGKQATQRDAINVRRRRSITR. Intrachain disulfides connect C49–C61, C53–C70, and C60–C74.

It belongs to the conotoxin O3 superfamily. In terms of tissue distribution, expressed by the venom duct.

The protein localises to the secreted. This Conus ventricosus (Mediterranean cone) protein is Conotoxin VnMSGL-0112.